A 274-amino-acid chain; its full sequence is Tropomyosin (274 aa).

The span at 1 to 35 shows a compositional bias: basic and acidic residues; that stretch reads MKLEKDNAMDRADTLEQQNKEANNRAEKSEEEVHN. The tract at residues 1-45 is disordered; the sequence is MKLEKDNAMDRADTLEQQNKEANNRAEKSEEEVHNLQKRMQQLEN. A coiled-coil region spans residues 1–274; it reads MKLEKDNAMD…DQTFSELSGY (274 aa).

The protein belongs to the tropomyosin family. As to quaternary structure, homodimer.

In terms of biological role, tropomyosin, in association with the troponin complex, plays a central role in the calcium dependent regulation of muscle contraction. The polypeptide is Tropomyosin (Metapenaeus ensis (Greasyback shrimp)).